The chain runs to 72 residues: Translation initiation factor IF-1 (72 aa).

An S1-like domain is found at 1–72 (MPKEEVLEFP…TKGRITYRFK (72 aa)).

This sequence belongs to the IF-1 family. Component of the 30S ribosomal translation pre-initiation complex which assembles on the 30S ribosome in the order IF-2 and IF-3, IF-1 and N-formylmethionyl-tRNA(fMet); mRNA recruitment can occur at any time during PIC assembly.

It localises to the cytoplasm. In terms of biological role, one of the essential components for the initiation of protein synthesis. Stabilizes the binding of IF-2 and IF-3 on the 30S subunit to which N-formylmethionyl-tRNA(fMet) subsequently binds. Helps modulate mRNA selection, yielding the 30S pre-initiation complex (PIC). Upon addition of the 50S ribosomal subunit IF-1, IF-2 and IF-3 are released leaving the mature 70S translation initiation complex. This chain is Translation initiation factor IF-1, found in Rhizobium etli (strain ATCC 51251 / DSM 11541 / JCM 21823 / NBRC 15573 / CFN 42).